A 186-amino-acid chain; its full sequence is dCTP deaminase, dUMP-forming (186 aa).

DCTP contacts are provided by residues 99 to 104 (KSSIAR), Asp117, 125 to 127 (TLE), Gln146, Tyr159, Lys166, and Gln170. Glu127 functions as the Proton donor/acceptor in the catalytic mechanism.

Belongs to the dCTP deaminase family. As to quaternary structure, homotrimer.

It catalyses the reaction dCTP + 2 H2O = dUMP + NH4(+) + diphosphate. The protein operates within pyrimidine metabolism; dUMP biosynthesis; dUMP from dCTP: step 1/1. Bifunctional enzyme that catalyzes both the deamination of dCTP to dUTP and the hydrolysis of dUTP to dUMP without releasing the toxic dUTP intermediate. This Methanosphaerula palustris (strain ATCC BAA-1556 / DSM 19958 / E1-9c) protein is dCTP deaminase, dUMP-forming.